A 236-amino-acid chain; its full sequence is uncharacterized protein (236 aa).

The 206-residue stretch at 3 to 208 folds into the DPCK domain; it reads ILGLTGSIAT…PSYFFTLLCL (206 aa). 8–15 is an ATP binding site; that stretch reads GSIATGKS. Residues S82 and S86 each carry the phosphoserine modification.

The protein belongs to the CoaE family.

Its subcellular location is the cytoplasm. This is an uncharacterized protein from Schizosaccharomyces pombe (strain 972 / ATCC 24843) (Fission yeast).